A 272-amino-acid polypeptide reads, in one-letter code: MTSQELTEQILKKQSFLCVGLDTDLDKIPTYLLSEKDPVFSFNKAIIDATHQYCVAYKPNIAFYEAIGVDGWKALKKTIEYLHAEYPDLYTIADAKRGDIGNTSRMYAKAFFEDLGFDSITVAPYMGKDSVEPFLEFTNKHTILLALTSNEGAFDFQTLKTGDKELYKKVIETSKNWQNSENLMYVVGATKAEYLAEIRKIIPENFLLVPGVGAQGGSLEEVCKYGMTKNVGLLINSSRKIIYASDSSNFAEIAGAKAEAMQNQMASELEKL.

The Proton donor role is filled by Lys-96.

The protein belongs to the OMP decarboxylase family. Type 2 subfamily.

The enzyme catalyses orotidine 5'-phosphate + H(+) = UMP + CO2. Its pathway is pyrimidine metabolism; UMP biosynthesis via de novo pathway; UMP from orotate: step 2/2. This chain is Orotidine 5'-phosphate decarboxylase, found in Christiangramia forsetii (strain DSM 17595 / CGMCC 1.15422 / KT0803) (Gramella forsetii).